A 343-amino-acid polypeptide reads, in one-letter code: Heat-inducible transcription repressor HrcA (343 aa).

It belongs to the HrcA family.

Functionally, negative regulator of class I heat shock genes (grpE-dnaK-dnaJ and groELS operons). Prevents heat-shock induction of these operons. The sequence is that of Heat-inducible transcription repressor HrcA from Mycobacterium avium (strain 104).